The sequence spans 152 residues: Nucleoside diphosphate kinase B (152 aa).

The interaction with AKAP13 stretch occupies residues 1–66; sequence MANLERTFIA…DRPFFPGLVK (66 aa). Residues Lys12, Phe60, Arg88, Thr94, Arg105, and Asn115 each contribute to the ATP site. His118 (pros-phosphohistidine intermediate) is an active-site residue.

The protein belongs to the NDK family. Hexamer of two different chains: An and B (A6, A5B, A4B2, A3B3, A2B4, AB5, B6). Interacts with CAPN8. Interacts with AKAP13. Interacts with ITGB1BP1 (via C-terminal domain region). Interacts with BCL2L10. It depends on Mg(2+) as a cofactor. As to expression, expressed in the base region of the oxyntic and pyloric mucosae.

It localises to the cytoplasm. The protein localises to the cell projection. It is found in the lamellipodium. Its subcellular location is the ruffle. The protein resides in the nucleus. The enzyme catalyses a 2'-deoxyribonucleoside 5'-diphosphate + ATP = a 2'-deoxyribonucleoside 5'-triphosphate + ADP. It carries out the reaction a ribonucleoside 5'-diphosphate + ATP = a ribonucleoside 5'-triphosphate + ADP. The catalysed reaction is ATP + protein L-histidine = ADP + protein N-phospho-L-histidine.. In terms of biological role, major role in the synthesis of nucleoside triphosphates other than ATP. The ATP gamma phosphate is transferred to the NDP beta phosphate via a ping-pong mechanism, using a phosphorylated active-site intermediate. Negatively regulates Rho activity by interacting with AKAP13/LBC. Acts as a transcriptional activator of the MYC gene; binds DNA non-specifically. Binds to both single-stranded guanine- and cytosine-rich strands within the nuclease hypersensitive element (NHE) III(1) region of the MYC gene promoter. Does not bind to duplex NHE III(1). Has G-quadruplex (G4) DNA-binding activity, which is independent of its nucleotide-binding and kinase activity. Binds both folded and unfolded G4 with similar low nanomolar affinities. Stabilizes folded G4s regardless of whether they are prefolded or not. Exhibits histidine protein kinase activity. This Mus musculus (Mouse) protein is Nucleoside diphosphate kinase B (Nme2).